The sequence spans 72 residues: Translation initiation factor IF-1 (72 aa).

The region spanning 1 to 72 (MTKEDSFEMH…SKGRIIFRSR (72 aa)) is the S1-like domain.

The protein belongs to the IF-1 family. In terms of assembly, component of the 30S ribosomal translation pre-initiation complex which assembles on the 30S ribosome in the order IF-2 and IF-3, IF-1 and N-formylmethionyl-tRNA(fMet); mRNA recruitment can occur at any time during PIC assembly.

It is found in the cytoplasm. One of the essential components for the initiation of protein synthesis. Stabilizes the binding of IF-2 and IF-3 on the 30S subunit to which N-formylmethionyl-tRNA(fMet) subsequently binds. Helps modulate mRNA selection, yielding the 30S pre-initiation complex (PIC). Upon addition of the 50S ribosomal subunit IF-1, IF-2 and IF-3 are released leaving the mature 70S translation initiation complex. The protein is Translation initiation factor IF-1 of Blochmanniella pennsylvanica (strain BPEN).